The sequence spans 207 residues: Protein GET1 (207 aa).

Topologically, residues 1–4 (MPSL) are lumenal. Residues 5–24 (LISVLFLHIAIYIINTIAAS) form a helical membrane-spanning segment. Topologically, residues 25–110 (TIDSLLWLIY…FFDVAVKALR (86 aa)) are cytoplasmic. Residues 44 to 97 (IAREQHQMKLEVVQLKREMNATSSQDEFAKWAKLRRRHDKALEEYEVKNKQFSR) adopt a coiled-coil conformation. The helical transmembrane segment at 111–131 (WAGTSGLIVFLQFWFSKTPIF) threads the bilayer. Residues 132–155 (TLPPSWIPWQVEWVLSFPRAPMGT) lie on the Lumenal side of the membrane. The helical transmembrane segment at 156–172 (VSIQVWGGACAVVVALI) threads the bilayer. The Cytoplasmic segment spans residues 173–207 (GEAIGATVRYLYASKDSMEAIKVGAGAVEKEKKRQ).

This sequence belongs to the WRB/GET1 family. In terms of assembly, interacts with GET3.

It is found in the endoplasmic reticulum membrane. Required for the post-translational delivery of tail-anchored (TA) proteins to the endoplasmic reticulum. Acts as a membrane receptor for soluble GET3, which recognizes and selectively binds the transmembrane domain of TA proteins in the cytosol. The sequence is that of Protein GET1 from Paracoccidioides brasiliensis (strain Pb18).